A 617-amino-acid polypeptide reads, in one-letter code: Tetratricopeptide repeat protein 39B (617 aa).

TPR repeat units lie at residues 328–361 (SLILFYHARIELLKGNAEKAQETFRKCISVQEEW) and 561–594 (PFTLFELAFLYKSQGEIDKAIKVLETARNNYKDY).

The protein belongs to the TTC39 family.

In terms of biological role, regulates high density lipoprotein (HDL) cholesterol metabolism by promoting the ubiquitination and degradation of the oxysterols receptors LXR (NR1H2 and NR1H3). The chain is Tetratricopeptide repeat protein 39B (Ttc39b) from Rattus norvegicus (Rat).